The primary structure comprises 539 residues: Glucose-6-phosphate isomerase (539 aa).

The active-site Proton donor is glutamate 349. Catalysis depends on residues histidine 380 and lysine 508. A disordered region spans residues 519 to 539 (ESGASGQHDPSTAGLIQRLKR).

This sequence belongs to the GPI family.

Its subcellular location is the cytoplasm. It carries out the reaction alpha-D-glucose 6-phosphate = beta-D-fructose 6-phosphate. Its pathway is carbohydrate biosynthesis; gluconeogenesis. It participates in carbohydrate degradation; glycolysis; D-glyceraldehyde 3-phosphate and glycerone phosphate from D-glucose: step 2/4. Functionally, catalyzes the reversible isomerization of glucose-6-phosphate to fructose-6-phosphate. The polypeptide is Glucose-6-phosphate isomerase (Caulobacter vibrioides (strain ATCC 19089 / CIP 103742 / CB 15) (Caulobacter crescentus)).